A 341-amino-acid chain; its full sequence is MLIAQRPTITEEPVHDTRSRFVIEPLEPGFGYTLGNSLRRTLLSSIPGAAVTSLRIDGVLHEFSTVPGAKEDVTEMILNIKELVVSSEHDDPQVIYLRKQGPCEVTAADIVAPAGVEVHNPDLHIATLNDKGKLEIEMVVERGRGYVPAAQNKLPGHEIGRIPIDSIYSPVLKVTYKVEATRVEQRTDFDRLIMDVETKPSMRPRDAMASAGKTLVELFGLVRELNVDAEGIDIGPSPSDAALAADLALPIEDLNLTVRSYNCLKREGIHTVGELVARSEADLLDIRNFGQKSIEEVKTKLAEMGLSLKDSPPGFDPGRVVYSASRSDYDEDQRYIETEQL.

Residues 1-226 are alpha N-terminal domain (alpha-NTD); that stretch reads MLIAQRPTIT…ELFGLVRELN (226 aa). Positions 241 to 341 are alpha C-terminal domain (alpha-CTD); the sequence is AALAADLALP…DQRYIETEQL (101 aa).

The protein belongs to the RNA polymerase alpha chain family. As to quaternary structure, homodimer. The RNAP catalytic core consists of 2 alpha, 1 beta, 1 beta' and 1 omega subunit. When a sigma factor is associated with the core the holoenzyme is formed, which can initiate transcription.

The catalysed reaction is RNA(n) + a ribonucleoside 5'-triphosphate = RNA(n+1) + diphosphate. DNA-dependent RNA polymerase catalyzes the transcription of DNA into RNA using the four ribonucleoside triphosphates as substrates. This Acidothermus cellulolyticus (strain ATCC 43068 / DSM 8971 / 11B) protein is DNA-directed RNA polymerase subunit alpha.